Reading from the N-terminus, the 82-residue chain is Penaeidin-3g (82 aa).

Residues 1 to 19 (MRLVVCLVFLASFALVCQG) form the signal peptide. At glutamine 20 the chain carries Pyrrolidone carboxylic acid. Disulfide bonds link cysteine 51–cysteine 66, cysteine 55–cysteine 73, and cysteine 67–cysteine 74. A Serine amide modification is found at serine 81.

The protein belongs to the penaeidin family.

The protein resides in the cytoplasmic granule. In terms of biological role, antibacterial and antifungal activity. Presents chitin-binding activity. The polypeptide is Penaeidin-3g (Penaeus vannamei (Whiteleg shrimp)).